The following is a 539-amino-acid chain: Transcription factor prr1 (539 aa).

The DNA-binding element occupies 7 to 111 (SSDFVRKLFN…LLDNIKRKAP (105 aa)). Position 221 is a phosphothreonine (threonine 221). Serine 223 bears the Phosphoserine mark. Residues 251-263 (GTAQPSLYNTPSS) are compositionally biased toward polar residues. A disordered region spans residues 251–281 (GTAQPSLYNTPSSDYELANQEKPADSMASAA). A Response regulatory domain is found at 369 to 483 (RILLVEDDEL…TLLQLLKKQL (115 aa)). 4-aspartylphosphate is present on aspartate 418.

In the N-terminal section; belongs to the HSF family.

The protein resides in the nucleus. Functionally, involved in oxidative stress. Transcription factor that acts upon trr1 and ctt1. This chain is Transcription factor prr1 (prr1), found in Schizosaccharomyces pombe (strain 972 / ATCC 24843) (Fission yeast).